A 699-amino-acid polypeptide reads, in one-letter code: Auxin response factor 1 (699 aa).

Residues 122–224 (FCKILTPSDT…EQRVGVRRLV (103 aa)) constitute a DNA-binding region (TF-B3). Disordered stretches follow at residues 539–565 (TTTD…DSGQ) and 680–699 (EPHP…KTGF). Positions 595–684 (RTRIKVQMHG…DEKKIEPHPK (90 aa)) constitute a PB1 domain. Positions 687–699 (SSANPEQDQKTGF) are enriched in polar residues.

This sequence belongs to the ARF family. In terms of assembly, homodimers and heterodimers. Expressed in roots, culms, leaves and young panicles.

The protein localises to the nucleus. Functionally, auxin response factors (ARFs) are transcriptional factors that bind specifically to the DNA sequence 5'-TGTCTC-3' found in the auxin-responsive promoter elements (AuxREs). The protein is Auxin response factor 1 (ARF1) of Oryza sativa subsp. japonica (Rice).